The chain runs to 249 residues: DNA repair protein RecO (249 aa).

This sequence belongs to the RecO family.

Functionally, involved in DNA repair and RecF pathway recombination. In Rhodopseudomonas palustris (strain BisB5), this protein is DNA repair protein RecO.